The chain runs to 286 residues: Phycobilisome 31.8 kDa linker polypeptide, phycoerythrin-associated, rod (286 aa).

Positions Pro2–Leu179 constitute a PBS-linker domain. Residues Gly231–Val286 enclose the CpcD-like domain.

It belongs to the phycobilisome linker protein family. In terms of assembly, the phycobilisome is a hemidiscoidal structure that is composed of two distinct substructures: a core complex and six rods radiating from the core.

Its subcellular location is the cellular thylakoid membrane. In terms of biological role, rod linker protein, associated with phycoerythrocyanin. Linker polypeptides determine the state of aggregation and the location of the disk-shaped phycobiliprotein units within the phycobilisome and modulate their spectroscopic properties in order to mediate a directed and optimal energy transfer. The sequence is that of Phycobilisome 31.8 kDa linker polypeptide, phycoerythrin-associated, rod (cpeC) from Microchaete diplosiphon (Fremyella diplosiphon).